Here is a 327-residue protein sequence, read N- to C-terminus: Elongation factor P--(R)-beta-lysine ligase (327 aa).

80 to 82 serves as a coordination point for substrate; it reads SPE. ATP-binding positions include 104 to 106 and Asn113; that span reads RNE. Tyr122 is a binding site for substrate. Residue 246-247 participates in ATP binding; sequence EL. Glu253 serves as a coordination point for substrate. An ATP-binding site is contributed by Gly302.

This sequence belongs to the class-II aminoacyl-tRNA synthetase family. EpmA subfamily. In terms of assembly, homodimer.

It catalyses the reaction D-beta-lysine + L-lysyl-[protein] + ATP = N(6)-((3R)-3,6-diaminohexanoyl)-L-lysyl-[protein] + AMP + diphosphate + H(+). Its function is as follows. With EpmB is involved in the beta-lysylation step of the post-translational modification of translation elongation factor P (EF-P). Catalyzes the ATP-dependent activation of (R)-beta-lysine produced by EpmB, forming a lysyl-adenylate, from which the beta-lysyl moiety is then transferred to the epsilon-amino group of a conserved specific lysine residue in EF-P. The polypeptide is Elongation factor P--(R)-beta-lysine ligase (Haemophilus ducreyi (strain 35000HP / ATCC 700724)).